The following is a 173-amino-acid chain: Co-chaperone protein HscB (173 aa).

A J domain is found at 2–74 (DYFTLFGLPV…LKRAEYMLSL (73 aa)).

It belongs to the HscB family. Interacts with HscA and stimulates its ATPase activity. Interacts with IscU.

Functionally, co-chaperone involved in the maturation of iron-sulfur cluster-containing proteins. Seems to help targeting proteins to be folded toward HscA. The polypeptide is Co-chaperone protein HscB (Serratia proteamaculans (strain 568)).